The chain runs to 83 residues: MSGSTGERSFADIITSIRYWVIHSITIPSLFIAGWLFVSTGLAYDVFGSPRPNEYFTESRQGIPLITGRFDSLEQLDEFSRSF.

The helical transmembrane segment at 21–35 (VIHSITIPSLFIAGW) threads the bilayer. His23 is a binding site for heme.

Belongs to the PsbE/PsbF family. As to quaternary structure, heterodimer of an alpha subunit and a beta subunit. PSII is composed of 1 copy each of membrane proteins PsbA, PsbB, PsbC, PsbD, PsbE, PsbF, PsbH, PsbI, PsbJ, PsbK, PsbL, PsbM, PsbT, PsbX, PsbY, PsbZ, Psb30/Ycf12, at least 3 peripheral proteins of the oxygen-evolving complex and a large number of cofactors. It forms dimeric complexes. Heme b is required as a cofactor.

It localises to the plastid. The protein localises to the chloroplast thylakoid membrane. This b-type cytochrome is tightly associated with the reaction center of photosystem II (PSII). PSII is a light-driven water:plastoquinone oxidoreductase that uses light energy to abstract electrons from H(2)O, generating O(2) and a proton gradient subsequently used for ATP formation. It consists of a core antenna complex that captures photons, and an electron transfer chain that converts photonic excitation into a charge separation. This Amborella trichopoda protein is Cytochrome b559 subunit alpha.